The chain runs to 205 residues: LexA repressor (205 aa).

The H-T-H motif DNA-binding region spans 28–48 (RAEIAKRLGFKSANAAEEHLK). Catalysis depends on for autocatalytic cleavage activity residues Ser122 and Lys159.

Belongs to the peptidase S24 family. Homodimer.

The catalysed reaction is Hydrolysis of Ala-|-Gly bond in repressor LexA.. Its function is as follows. Represses a number of genes involved in the response to DNA damage (SOS response), including recA and lexA. In the presence of single-stranded DNA, RecA interacts with LexA causing an autocatalytic cleavage which disrupts the DNA-binding part of LexA, leading to derepression of the SOS regulon and eventually DNA repair. This Shewanella woodyi (strain ATCC 51908 / MS32) protein is LexA repressor.